The following is a 319-amino-acid chain: Translocon-associated protein subunit alpha (319 aa).

A signal peptide spans 1-21 (MRLLPRLLLLFLLAFPAAVLL). The Lumenal segment spans residues 22 to 208 (RGGPGGSLAV…EREDGLDGET (187 aa)). Acidic residues predominate over residues 35-76 (LTEDEETVEDPIIEDEDDEAEVEEDEPTDLAEEKEEEEDVSS). Residues 35-84 (LTEDEETVEDPIIEDEDDEAEVEEDEPTDLAEEKEEEEDVSSEPEASPSA) form a disordered region. N-linked (GlcNAc...) asparagine glycosylation is found at N137 and N192. A helical transmembrane segment spans residues 209-229 (IFMYMFLAGLGLLVVVGLHQL). At 230–319 (LESRKRKRPI…SLRQLAVCGI (90 aa)) the chain is on the cytoplasmic side. Residue S248 is modified to Phosphoserine. T261 carries the post-translational modification Phosphothreonine.

It belongs to the TRAP-alpha family. In terms of assembly, heterotetramer of TRAP-alpha, TRAP-beta, TRAP-delta and TRAP-gamma. Interacts with palmitoylated calnexin (CALX), the interaction is required for efficient folding of glycosylated proteins.

It localises to the endoplasmic reticulum membrane. Its function is as follows. TRAP proteins are part of a complex whose function is to bind calcium to the ER membrane and thereby regulate the retention of ER resident proteins. May be involved in the recycling of the translocation apparatus after completion of the translocation process or may function as a membrane-bound chaperone facilitating folding of translocated proteins. In Rattus norvegicus (Rat), this protein is Translocon-associated protein subunit alpha (Ssr1).